Here is a 355-residue protein sequence, read N- to C-terminus: Methylthioribose-1-phosphate isomerase (355 aa).

Residues 50–52 (RGA), arginine 93, and glutamine 198 each bind substrate. Aspartate 239 acts as the Proton donor in catalysis. 249–250 (NK) provides a ligand contact to substrate.

It belongs to the eIF-2B alpha/beta/delta subunits family. MtnA subfamily. As to quaternary structure, homodimer.

The enzyme catalyses 5-(methylsulfanyl)-alpha-D-ribose 1-phosphate = 5-(methylsulfanyl)-D-ribulose 1-phosphate. Its pathway is amino-acid biosynthesis; L-methionine biosynthesis via salvage pathway; L-methionine from S-methyl-5-thio-alpha-D-ribose 1-phosphate: step 1/6. Functionally, catalyzes the interconversion of methylthioribose-1-phosphate (MTR-1-P) into methylthioribulose-1-phosphate (MTRu-1-P). In Geobacillus kaustophilus (strain HTA426), this protein is Methylthioribose-1-phosphate isomerase.